The chain runs to 330 residues: MKKSFIHQQEEISFVKNTFTQYLIAKLDVVEVQGPILSRVGDGMQDNLSGVENPVSVHVLNIPNATFEVVHSLAKWKRHTLARFGFNEGEGLVVNMKALRPDEDSLDQTHSVYVDQWDWEKVIPDGQRNLAYLKETVETIYKVIRLTELAVEARYDIEAVLPKKITFIHTEELVARYPDLTPKERENAITKEFDAVFLIGIGGVLPDGKPHDGRAPDYDDWTSESENGYHGLNGDILVWNEQLGTAFELFSMGIRVDEEALKRQVDITGDQERLQFDWHKSLLNGLFPLTIGGGIGQSRMAMFLLRKKHIGEVQTSVWPQEVRDTYDNIL.

It belongs to the class-II aminoacyl-tRNA synthetase family. AsnA subfamily.

It is found in the cytoplasm. The catalysed reaction is L-aspartate + NH4(+) + ATP = L-asparagine + AMP + diphosphate + H(+). It functions in the pathway amino-acid biosynthesis; L-asparagine biosynthesis; L-asparagine from L-aspartate (ammonia route): step 1/1. The sequence is that of Aspartate--ammonia ligase from Streptococcus equi subsp. equi (strain 4047).